The chain runs to 139 residues: Acidic phospholipase A2 5 (139 aa).

Residues Met1 to Gly16 form the signal peptide. 7 cysteine pairs are disulfide-bonded: Cys42-Cys131, Cys44-Cys60, Cys59-Cys111, Cys65-Cys139, Cys66-Cys104, Cys73-Cys97, and Cys91-Cys102. The Ca(2+) site is built by Tyr43, Gly45, and Gly47. His63 is a catalytic residue. Asp64 is a binding site for Ca(2+). Asp105 is an active-site residue.

It belongs to the phospholipase A2 family. Group II subfamily. D49 sub-subfamily. It depends on Ca(2+) as a cofactor. In terms of tissue distribution, expressed by the venom gland.

The protein resides in the secreted. The enzyme catalyses a 1,2-diacyl-sn-glycero-3-phosphocholine + H2O = a 1-acyl-sn-glycero-3-phosphocholine + a fatty acid + H(+). Its function is as follows. PLA2 catalyzes the calcium-dependent hydrolysis of the 2-acyl groups in 3-sn-phosphoglycerides. This is Acidic phospholipase A2 5 from Echis pyramidum leakeyi (Leakey's carpet viper).